The following is a 377-amino-acid chain: tRNA-splicing endonuclease subunit SEN2 (377 aa).

Residues 119-174 (ETEMTLEKVTQQRRLQRLEFKKERAKLERELLELRKKGGHIDEENILLEKQRESLR) are a coiled coil. Catalysis depends on residues Tyr289, His297, and Lys328.

It belongs to the tRNA-intron endonuclease family. As to quaternary structure, heterotetramer composed of SEN2, SEN15, SEN34 and SEN54. Interacts directly with SEN54.

Its subcellular location is the nucleus. The protein localises to the endomembrane system. It is found in the mitochondrion outer membrane. It catalyses the reaction pretRNA = a 3'-half-tRNA molecule with a 5'-OH end + a 5'-half-tRNA molecule with a 2',3'-cyclic phosphate end + an intron with a 2',3'-cyclic phosphate and a 5'-hydroxyl terminus.. In terms of biological role, constitutes one of the two catalytic subunit of the tRNA-splicing endonuclease complex, a complex responsible for identification and cleavage of the splice sites in pre-tRNA. It cleaves pre-tRNA at the 5'- and 3'-splice sites to release the intron. The products are an intron and two tRNA half-molecules bearing 2',3'-cyclic phosphate and 5'-OH termini. There are no conserved sequences at the splice sites, but the intron is invariably located at the same site in the gene, placing the splice sites an invariant distance from the constant structural features of the tRNA body. This subunit may anchor the endonuclease complex to the nuclear membrane. Probably carries the active site for 5'-splice site cleavage. In Saccharomyces cerevisiae (strain ATCC 204508 / S288c) (Baker's yeast), this protein is tRNA-splicing endonuclease subunit SEN2 (SEN2).